A 220-amino-acid polypeptide reads, in one-letter code: uncharacterized protein (220 aa).

A helical transmembrane segment spans residues 10-30 (FFIIGGVILSIGLILFFLLGF).

It is found in the membrane. This is an uncharacterized protein from Methanocaldococcus jannaschii (strain ATCC 43067 / DSM 2661 / JAL-1 / JCM 10045 / NBRC 100440) (Methanococcus jannaschii).